Consider the following 108-residue polypeptide: Replication initiation control protein YabA (108 aa).

The Zn(2+) site is built by His-83, Cys-85, Cys-99, and Cys-102.

Belongs to the YabA family. In terms of assembly, homotetramer. Interacts with both DnaA and DnaN, acting as a bridge between these two proteins. Zn(2+) is required as a cofactor.

It localises to the cytoplasm. Its subcellular location is the nucleoid. Its function is as follows. Involved in control of chromosome replication initiation. Inhibits the cooperative binding of DnaA to the oriC region, thus negatively regulating initiation of chromosome replication. Inhibits the ability of DnaA-ATP to form a helix on DNA; does not disassemble preformed DnaA-DNA helices. Decreases the residence time of DnaA on the chromosome at its binding sites (oriC, replication forks and promoter-binding sites). Tethers DnaA to the replication machinery via the DNA polymerase beta sliding clamp subunit (dnaN). Associates with oriC and other DnaA targets on the chromosome in a DnaA-dependent manner. This is Replication initiation control protein YabA from Lactococcus lactis subsp. lactis (strain IL1403) (Streptococcus lactis).